Reading from the N-terminus, the 851-residue chain is DNA mismatch repair protein MutS (851 aa).

602–609 contacts ATP; sequence GPNMSGKS.

This sequence belongs to the DNA mismatch repair MutS family.

Its function is as follows. This protein is involved in the repair of mismatches in DNA. It is possible that it carries out the mismatch recognition step. This protein has a weak ATPase activity. The chain is DNA mismatch repair protein MutS from Streptococcus pyogenes serotype M12 (strain MGAS2096).